A 261-amino-acid polypeptide reads, in one-letter code: Transcription factor BEE 3 (261 aa).

The span at 72-82 shows a compositional bias: low complexity; it reads NIQNNEESSSQ. Disordered stretches follow at residues 72-158 and 242-261; these read NIQN…TDSH and VEMGQGRDGSSVFHSSSWTL. Residues 95 to 123 show a composition bias toward polar residues; it reads VSTSENSVSDQTLSTSSAQVSINGNISTK. Over residues 135–146 the composition is skewed to basic and acidic residues; the sequence is NREEEKEREVVH. The bHLH domain maps to 153-203; that stretch reads QATDSHSIAERVRRGKINERLKCLQDIVPGCYKTMGMATMLDEIINYVQSL.

In terms of assembly, homodimer. As to expression, expressed in stems.

It localises to the nucleus. In terms of biological role, positive regulator of brassinosteroid signaling. In Arabidopsis thaliana (Mouse-ear cress), this protein is Transcription factor BEE 3 (BEE3).